We begin with the raw amino-acid sequence, 688 residues long: MQVSSLNEVKIYSLSCGKSLPEWLSDRKKRALQKKDVDVRRRIELIQDFEMPTVCTTIKVSKDGQYILATGTYKPRVRCYDTYQLSLKFERCLDSEVVTFEILSDDYSKIVFLHNDRYIEFHSQSGFYYKTRIPKFGRDFSYHYPSCDLYFVGASSEVYRLNLEQGRYLNPLQTDAAENNVCDINSVHGLFATGTIEGRVECWDPRTRNRVGLLDCALNSVTADSEINSLPTISALKFNGALTMAVGTTTGQVLLYDLRSDKPLLVKDHQYGLPIKSVHFQDSLDLILSADSRIVKMWNKNSGKIFTSLEPEHDLNDVCLYPNSGMLLTANETPKMGIYYIPVLGPAPRWCSFLDNLTEELEENPESTVYDDYKFVTKKDLENLGLTHLIGSPFLRAYMHGFFMDIRLYHKVKLMVNPFAYEEYRKDKIRQKIEETRAQRVQLKKLPKVNKELALKLIEEEEEKQKSTWKKKVKSLPNILTDDRFKVMFENPDFQVDEESEEFRLLNPLVSKISEKRKKKLRLLEQQELREKEEEEEPEGKPSDAESSESSDDEKAWVEEVRKQRRLLQQEEKVKRQERLKEDQQTVLKPQFYEIKAGEEFRSFKDSATKQKLMNKTLEDRLKIEAKNGTLSVSDTTVGSKQLTFTLKRSEQQKKQQEAEKLHRQERKRLRRSAGHLKSRHKRGRSFH.

Methionine 1 is subject to N-acetylmethionine. Residue serine 25 is modified to Phosphoserine. 7 WD repeats span residues 44-82, 88-124, 127-163, 170-205, 219-258, 262-300, and 304-341; these read ELIQDFEMPTVCTTIKVSKDGQYILATGTYKPRVRCYDT, KFERCLDSEVVTFEILSDDYSKIVFLHNDRYIEFHSQ, FYYKTRIPKFGRDFSYHYPSCDLYFVGASSEVYRLNL, NPLQTDAAENNVCDINSVHGLFATGTIEGRVECWDP, NSVTADSEINSLPTISALKFNGALTMAVGTTTGQVLLYDL, KPLLVKDHQYGLPIKSVHFQDSLDLILSADSRIVKMWNK, and KIFTSLEPEHDLNDVCLYPNSGMLLTANETPKMGIYYI. Positions 423–446 form a coiled coil; that stretch reads EYRKDKIRQKIEETRAQRVQLKKL. Phosphoserine is present on serine 475. A Phosphothreonine modification is found at threonine 481. Serine 514 is subject to Phosphoserine. 2 coiled-coil regions span residues 514 to 589 and 640 to 673; these read SEKR…TVLK and SKQLTFTLKRSEQQKKQQEAEKLHRQERKRLRRS. 2 disordered regions span residues 529–557 and 645–688; these read LREKEEEEEPEGKPSDAESSESSDDEKAW and FTLK…RSFH. The span at 648-663 shows a compositional bias: basic and acidic residues; the sequence is KRSEQQKKQQEAEKLH. Over residues 664-688 the composition is skewed to basic residues; it reads RQERKRLRRSAGHLKSRHKRGRSFH.

This sequence belongs to the WD repeat NOL10/ENP2 family.

The protein resides in the nucleus. Its subcellular location is the nucleolus. This Homo sapiens (Human) protein is Nucleolar protein 10 (NOL10).